A 278-amino-acid chain; its full sequence is Aquaporin NIP3-3 (278 aa).

2 helical membrane passes run 70 to 90 (VSAE…TIIM) and 99 to 119 (TLLG…LSLI). The short motif at 127-129 (NPA) is the NPA 1 element. 3 helical membrane passes run 141 to 163 (PSAH…SFAV), 185 to 205 (AFFV…ALAT), and 213 to 233 (LIAV…GPST). The NPA 2 motif lies at 238–240 (NPA). The chain crosses the membrane as a helical span at residues 255 to 275 (IWVYLVATPLGAIAGTGAYVA).

This sequence belongs to the MIP/aquaporin (TC 1.A.8) family. NIP (TC 1.A.8.12) subfamily. As to expression, expressed in leaves and at lower levels in roots and anthers.

The protein localises to the membrane. Functionally, aquaporins facilitate the transport of water and small neutral solutes across cell membranes. This chain is Aquaporin NIP3-3 (NIP3-3), found in Oryza sativa subsp. japonica (Rice).